A 753-amino-acid chain; its full sequence is LIM domain and actin-binding protein 1 (753 aa).

Position 1 is an N-acetylmethionine (Met-1). The residue at position 15 (Ser-15) is a Phosphoserine. Residues 46–56 (EEANMERKKNN) show a composition bias toward basic and acidic residues. Disordered stretches follow at residues 46-66 (EEANMERKKNNPESLPQHFRR) and 82-186 (GAEF…TSGK). Ser-132 carries the post-translational modification Phosphoserine. Residues 143–152 (PRSENSHDFK) show a composition bias toward basic and acidic residues. The short motif at 164–166 (CLG) is the Required for interaction with NPC1L1 element. Residues 167-177 (DSRHEAEKPET) show a composition bias toward basic and acidic residues. A phosphoserine mark is found at Ser-225, Ser-230, Ser-242, and Ser-263. 2 disordered regions span residues 276–326 (AAVS…VSTT) and 341–379 (TCNSQVKSEAQQPMHPKPLSPDARTSSLPESSPSKTAKK). Residues 278 to 291 (VSKQSSPASYTNEL) show a composition bias toward polar residues. Residues 292-305 (KTSESKTHKWEQKE) show a composition bias toward basic and acidic residues. The span at 342-351 (CNSQVKSEAQ) shows a compositional bias: polar residues. 4 positions are modified to phosphoserine: Ser-348, Ser-360, Ser-367, and Ser-372. Positions 363 to 375 (ARTSSLPESSPSK) are enriched in polar residues. In terms of domain architecture, LIM zinc-binding spans 386–446 (ESCVECQKTV…KPHFNQLFKS (61 aa)). Residue Lys-437 is modified to N6-succinyllysine. Residues Ser-467, Ser-485, and Ser-488 each carry the phosphoserine modification. Disordered stretches follow at residues 467–493 (SDNEETLGRPAQPPNAGESPHSPGVED), 505–669 (SMEA…FELE), and 682–703 (EDDNHVHAQQSPLEPEAPGWSG). Residues 491–511 (VEDAPIAKVGVLAASMEAKAS) form a required for interaction with MYO5B region. Composition is skewed to basic and acidic residues over residues 512-525 (SQREREDKPAETKK) and 554-565 (WPPEDDVCKTEA). Low complexity predominate over residues 598–609 (SSIKSPKASSPS). Phosphoserine occurs at positions 599, 602, 607, and 615. Residues 630 to 666 (MERKQTENARPSGEKENVGKSRWQGEEVPRSKDRSSF) are compositionally biased toward basic and acidic residues. A phosphoserine mark is found at Ser-692, Ser-720, and Ser-735.

In terms of assembly, interacts with NPC1L1; bridges NPC1L1 with MYO5B. Interacts with MYO5B; bridges MYO5B with NPC1L1. Interacts with PXN; this complex stabilizes actin dynamics. Binds to G-actin and F-actin. Interacts with LUZP1 (via C-terminus); both proteins restrict ciliation and may work together to regulate this process. Binds RAB40B (GTP-bound); interaction influences LIMA1 subcellular localization in lamellipodia during cell migration. Phosphorylation of the C-terminal region by MAPK1/MAPK3 reduces its association with F-actin and contributes to actin filament reorganization and enhances cell motility. Post-translationally, ubiquitinated by the ECS(RAB40B) complex leading to its degradation. Highly expressed in the small intestine, including the duodenum, jejunum, and ileum. Low expression in the liver and very low expressed in the heart, spleen, lung, brain, and pancreas. Isoform Alpha is highly expressed in embryos from day 7-11 and in adult spleen and lung. Isoform Beta expression is highest in adult kidney, testis, lung and liver, intermediate in heart, brain, spleen, skeletal muscle and low in embryos.

The protein localises to the cytoplasm. Its subcellular location is the cell junction. It is found in the focal adhesion. It localises to the cytoskeleton. The protein resides in the stress fiber. The protein localises to the cell membrane. Its subcellular location is the cell projection. It is found in the ruffle. It localises to the lamellipodium. Functionally, actin-binding protein involved in actin cytoskeleton regulation and dynamics. Increases the number and size of actin stress fibers and inhibits membrane ruffling. Inhibits actin filament depolymerization. Bundles actin filaments, delays filament nucleation and reduces formation of branched filaments. Acts as a negative regulator of primary cilium formation. Plays a role in cholesterol homeostasis. Influences plasma cholesterol levels through regulation of intestinal cholesterol absorption. May act as a scaffold protein by regulating NPC1L1 transportation, an essential protein for cholesterol absorption, to the plasma membrane by recruiting MYO5B to NPC1L1, and thus facilitates cholesterol uptake. This is LIM domain and actin-binding protein 1 (Lima1) from Mus musculus (Mouse).